Consider the following 99-residue polypeptide: Integration host factor subunit alpha (99 aa).

Belongs to the bacterial histone-like protein family. In terms of assembly, heterodimer of an alpha and a beta chain.

In terms of biological role, this protein is one of the two subunits of integration host factor, a specific DNA-binding protein that functions in genetic recombination as well as in transcriptional and translational control. The polypeptide is Integration host factor subunit alpha (Anaeromyxobacter sp. (strain Fw109-5)).